The chain runs to 158 residues: Putative pre-16S rRNA nuclease (158 aa).

Residues 138–158 (ELKPAQQTASRSGAGAGDGGS) form a disordered region.

This sequence belongs to the YqgF nuclease family.

It localises to the cytoplasm. Could be a nuclease involved in processing of the 5'-end of pre-16S rRNA. In Synechococcus sp. (strain CC9605), this protein is Putative pre-16S rRNA nuclease.